A 635-amino-acid chain; its full sequence is MNATVSSAVQSSLPFSGKTAQVDEGTVKPLPRSQKTYLSGSRPDIRVPMREISQSDTPASMGAEKNPPIYVYDTSGPYTDPAIKIDIRAGLAPLREKWIDERGDTEILSGPASIYGRQRLNDPRLAELRFDLKRSPRRARAGANVTQMHYARGGIVTPEMEFIAIRENQRCEHLADQQREMLARQHPGQDFGAFLPRHITPEFVRDEVARGRAIIPANINHPESEPMIIGRNFLVKINANIGNSALSSSIQEEVEKMTWAIRWGGDTVMDLSTGKNIHETREWIIRNSPVPIGTVPIYQALEKVNGKAEDLTWEIFRDTLIEQAEQGVDYFTIHAGVRLAYVPMTAKRLTGIVSRGGSIMAKWCLAHHKESFLYTQFEEICEIMKAYDVSFSLGDGLRPGSIYDANDEAQFAELKTLGELTQIAWKHDVQVMIEGPGHVPMHLIKENMDMQLKYCAEAPFYTLGPLTTDIAPGYDHITSAIGAAMIGWYGTAMLCYVTPKEHLGLPDKDDVKDGIITYKIAAHAADLAKGHPGAQLRDNALSKARFEFRWEDQFNLGLDPDKARQFHDETLPQEGAKLAHFCSMCGPHFCSMKITQDVRDFAASKGVSDQEALEKGMEEKASEFVARGTEIYSKV.

Residues M1–P14 show a composition bias toward polar residues. The disordered stretch occupies residues M1–S41. Residues N240, M269, Y298, H334, S354–G356, D395–R398, and E434 each bind substrate. Residue H438 coordinates Zn(2+). Residue Y461 coordinates substrate. H502 lines the Zn(2+) pocket. Positions 582, 585, and 590 each coordinate [4Fe-4S] cluster.

The protein belongs to the ThiC family. Homodimer. [4Fe-4S] cluster serves as cofactor.

The catalysed reaction is 5-amino-1-(5-phospho-beta-D-ribosyl)imidazole + S-adenosyl-L-methionine = 4-amino-2-methyl-5-(phosphooxymethyl)pyrimidine + CO + 5'-deoxyadenosine + formate + L-methionine + 3 H(+). The protein operates within cofactor biosynthesis; thiamine diphosphate biosynthesis. Catalyzes the synthesis of the hydroxymethylpyrimidine phosphate (HMP-P) moiety of thiamine from aminoimidazole ribotide (AIR) in a radical S-adenosyl-L-methionine (SAM)-dependent reaction. This chain is Phosphomethylpyrimidine synthase, found in Nitrosospira multiformis (strain ATCC 25196 / NCIMB 11849 / C 71).